The sequence spans 491 residues: Leucine aminopeptidase 1 (491 aa).

The Zn(2+) site is built by Lys252 and Asp257. Lys264 is a catalytic residue. Zn(2+) is bound by residues Asp275, Asp334, and Glu336. Arg338 is an active-site residue.

Belongs to the peptidase M17 family. Zn(2+) serves as cofactor. In terms of tissue distribution, expressed in the buccal cavity, pharynx, anterior gut and rectum.

The catalysed reaction is Release of an N-terminal amino acid, Xaa-|-Yaa-, in which Xaa is preferably Leu, but may be other amino acids including Pro although not Arg or Lys, and Yaa may be Pro. Amino acid amides and methyl esters are also readily hydrolyzed, but rates on arylamides are exceedingly low.. Its function is as follows. Probably acts as a digestive enzyme. The protein is Leucine aminopeptidase 1 (lap-1) of Caenorhabditis elegans.